The sequence spans 426 residues: Colanic acid biosynthesis protein WcaK (426 aa).

The protein belongs to the polysaccharide pyruvyl transferase family.

The protein operates within slime biogenesis; slime polysaccharide biosynthesis. The sequence is that of Colanic acid biosynthesis protein WcaK (wcaK) from Escherichia coli (strain K12).